The sequence spans 303 residues: Coenzyme PQQ synthesis protein B (303 aa).

This sequence belongs to the PqqB family.

The protein operates within cofactor biosynthesis; pyrroloquinoline quinone biosynthesis. Its function is as follows. May be involved in the transport of PQQ or its precursor to the periplasm. This Pseudomonas syringae pv. tomato (strain ATCC BAA-871 / DC3000) protein is Coenzyme PQQ synthesis protein B.